A 216-amino-acid chain; its full sequence is Histidine biosynthesis bifunctional protein HisIE (216 aa).

A phosphoribosyl-AMP cyclohydrolase region spans residues M1–T127. The interval L128–R216 is phosphoribosyl-ATP pyrophosphohydrolase.

It in the N-terminal section; belongs to the PRA-CH family. The protein in the C-terminal section; belongs to the PRA-PH family.

The protein localises to the cytoplasm. The enzyme catalyses 1-(5-phospho-beta-D-ribosyl)-ATP + H2O = 1-(5-phospho-beta-D-ribosyl)-5'-AMP + diphosphate + H(+). It catalyses the reaction 1-(5-phospho-beta-D-ribosyl)-5'-AMP + H2O = 1-(5-phospho-beta-D-ribosyl)-5-[(5-phospho-beta-D-ribosylamino)methylideneamino]imidazole-4-carboxamide. Its pathway is amino-acid biosynthesis; L-histidine biosynthesis; L-histidine from 5-phospho-alpha-D-ribose 1-diphosphate: step 2/9. It participates in amino-acid biosynthesis; L-histidine biosynthesis; L-histidine from 5-phospho-alpha-D-ribose 1-diphosphate: step 3/9. This is Histidine biosynthesis bifunctional protein HisIE (hisI) from Nostoc sp. (strain PCC 7120 / SAG 25.82 / UTEX 2576).